A 45-amino-acid chain; its full sequence is Photosystem II reaction center protein K (45 aa).

Positions 1 to 8 (MTQIFLIG) are excised as a propeptide. The chain crosses the membrane as a helical span at residues 20-40 (IVDVLPIIPVLFLLLAFVWQA).

This sequence belongs to the PsbK family. PSII is composed of 1 copy each of membrane proteins PsbA, PsbB, PsbC, PsbD, PsbE, PsbF, PsbH, PsbI, PsbJ, PsbK, PsbL, PsbM, PsbT, PsbX, PsbY, PsbZ, Psb30/Ycf12, at least 3 peripheral proteins of the oxygen-evolving complex and a large number of cofactors. It forms dimeric complexes.

It is found in the plastid. It localises to the chloroplast thylakoid membrane. In terms of biological role, one of the components of the core complex of photosystem II (PSII). PSII is a light-driven water:plastoquinone oxidoreductase that uses light energy to abstract electrons from H(2)O, generating O(2) and a proton gradient subsequently used for ATP formation. It consists of a core antenna complex that captures photons, and an electron transfer chain that converts photonic excitation into a charge separation. This is Photosystem II reaction center protein K from Ostreococcus tauri.